A 254-amino-acid chain; its full sequence is Probable phosphatase Sbal_1472 (254 aa).

Histidine 8, histidine 10, histidine 16, histidine 41, glutamate 74, histidine 102, histidine 132, aspartate 193, and histidine 195 together coordinate Zn(2+).

This sequence belongs to the PHP family. The cofactor is Zn(2+).

This is Probable phosphatase Sbal_1472 from Shewanella baltica (strain OS155 / ATCC BAA-1091).